Reading from the N-terminus, the 272-residue chain is Glutamate 5-kinase (272 aa).

Lys15 provides a ligand contact to ATP. The substrate site is built by Ser55, Asp142, and Asn158. Residues 178–179 (SD) and 220–226 (TGGMLSK) contribute to the ATP site.

Belongs to the glutamate 5-kinase family.

It localises to the cytoplasm. It carries out the reaction L-glutamate + ATP = L-glutamyl 5-phosphate + ADP. Its pathway is amino-acid biosynthesis; L-proline biosynthesis; L-glutamate 5-semialdehyde from L-glutamate: step 1/2. In terms of biological role, catalyzes the transfer of a phosphate group to glutamate to form L-glutamate 5-phosphate. This is Glutamate 5-kinase from Streptococcus equi subsp. zooepidemicus (strain H70).